Here is a 468-residue protein sequence, read N- to C-terminus: Glutamate--tRNA ligase (468 aa).

A 'HIGH' region motif is present at residues 12 to 22; it reads PSPTGMMHIGT. The 'KMSKS' region signature appears at 238–242; the sequence is KLSKR. Lysine 241 contributes to the ATP binding site.

Belongs to the class-I aminoacyl-tRNA synthetase family. Glutamate--tRNA ligase type 1 subfamily. As to quaternary structure, monomer.

Its subcellular location is the cytoplasm. The enzyme catalyses tRNA(Glu) + L-glutamate + ATP = L-glutamyl-tRNA(Glu) + AMP + diphosphate. Catalyzes the attachment of glutamate to tRNA(Glu) in a two-step reaction: glutamate is first activated by ATP to form Glu-AMP and then transferred to the acceptor end of tRNA(Glu). This chain is Glutamate--tRNA ligase, found in Phenylobacterium zucineum (strain HLK1).